A 509-amino-acid chain; its full sequence is Lanosterol 14-alpha demethylase (509 aa).

The chain crosses the membrane as a helical span at residues Gly30–Phe50. Cys455 serves as a coordination point for heme.

The protein belongs to the cytochrome P450 family. Requires heme as cofactor. Post-translationally, ubiquitinated by MARCHF6, leading to proteasomal degradation.

It is found in the endoplasmic reticulum membrane. It localises to the microsome membrane. The enzyme catalyses a 14alpha-methyl steroid + 3 reduced [NADPH--hemoprotein reductase] + 3 O2 = a Delta(14) steroid + formate + 3 oxidized [NADPH--hemoprotein reductase] + 4 H2O + 4 H(+). The catalysed reaction is lanosterol + 3 reduced [NADPH--hemoprotein reductase] + 3 O2 = 4,4-dimethyl-5alpha-cholesta-8,14,24-trien-3beta-ol + formate + 3 oxidized [NADPH--hemoprotein reductase] + 4 H2O + 4 H(+). It carries out the reaction 24,25-dihydrolanosterol + 3 reduced [NADPH--hemoprotein reductase] + 3 O2 = 4,4-dimethyl-8,14-cholestadien-3beta-ol + formate + 3 oxidized [NADPH--hemoprotein reductase] + 4 H2O + 4 H(+). It catalyses the reaction a 14alpha-methyl steroid + reduced [NADPH--hemoprotein reductase] + O2 = a 14alpha-hydroxymethyl steroid + oxidized [NADPH--hemoprotein reductase] + H2O + H(+). The enzyme catalyses a 14alpha-hydroxymethyl steroid + reduced [NADPH--hemoprotein reductase] + O2 = a 14alpha-formyl steroid + oxidized [NADPH--hemoprotein reductase] + 2 H2O + H(+). The catalysed reaction is a 14alpha-formyl steroid + reduced [NADPH--hemoprotein reductase] + O2 = a Delta(14) steroid + formate + oxidized [NADPH--hemoprotein reductase] + H2O + 2 H(+). It carries out the reaction lanosterol + reduced [NADPH--hemoprotein reductase] + O2 = 32-hydroxylanosterol + oxidized [NADPH--hemoprotein reductase] + H2O + H(+). It catalyses the reaction 32-hydroxylanosterol + reduced [NADPH--hemoprotein reductase] + O2 = 32-oxolanosterol + oxidized [NADPH--hemoprotein reductase] + 2 H2O + H(+). The enzyme catalyses 32-oxolanosterol + reduced [NADPH--hemoprotein reductase] + O2 = 4,4-dimethyl-5alpha-cholesta-8,14,24-trien-3beta-ol + formate + oxidized [NADPH--hemoprotein reductase] + H2O + 2 H(+). The catalysed reaction is 24,25-dihydrolanosterol + reduced [NADPH--hemoprotein reductase] + O2 = 32-hydroxy-24,25-dihydrolanosterol + oxidized [NADPH--hemoprotein reductase] + H2O + H(+). It carries out the reaction 32-hydroxy-24,25-dihydrolanosterol + reduced [NADPH--hemoprotein reductase] + O2 = 32-oxo-24,25-dihydrolanosterol + oxidized [NADPH--hemoprotein reductase] + 2 H2O + H(+). It catalyses the reaction 32-oxo-24,25-dihydrolanosterol + reduced [NADPH--hemoprotein reductase] + O2 = 4,4-dimethyl-8,14-cholestadien-3beta-ol + formate + oxidized [NADPH--hemoprotein reductase] + H2O + 2 H(+). It functions in the pathway steroid biosynthesis; zymosterol biosynthesis; zymosterol from lanosterol: step 1/6. Its activity is regulated as follows. Inhibited by azalanstat. Inhibited by azole antifungal agents ketoconazole, itraconazole and fluconazole. Its function is as follows. Sterol 14alpha-demethylase that plays a critical role in the cholesterol biosynthesis pathway, being cholesterol the major sterol component in mammalian membranes as well as a precursor for bile acid and steroid hormone synthesis. Cytochrome P450 monooxygenase that catalyzes the three-step oxidative removal of the 14alpha-methyl group (C-32) of sterols such as lanosterol (lanosta-8,24-dien-3beta-ol) and 24,25-dihydrolanosterol (DHL) in the form of formate, and converts the sterols to 4,4-dimethyl-5alpha-cholesta-8,14,24-trien-3beta-ol and 4,4-dimethyl-8,14-cholestadien-3beta-ol, respectively, which are intermediates of cholesterol biosynthesis. Can also demethylate substrates not intrinsic to mammals, such as eburicol (24-methylene-24,25-dihydrolanosterol), but at a lower rate than DHL. This Macaca fascicularis (Crab-eating macaque) protein is Lanosterol 14-alpha demethylase.